A 215-amino-acid chain; its full sequence is Large ribosomal subunit protein uL3 (215 aa).

Q156 carries the post-translational modification N5-methylglutamine.

The protein belongs to the universal ribosomal protein uL3 family. Part of the 50S ribosomal subunit. Forms a cluster with proteins L14 and L19. Methylated by PrmB.

Functionally, one of the primary rRNA binding proteins, it binds directly near the 3'-end of the 23S rRNA, where it nucleates assembly of the 50S subunit. The protein is Large ribosomal subunit protein uL3 of Xylella fastidiosa (strain 9a5c).